The sequence spans 138 residues: Large ribosomal subunit protein uL16 (138 aa).

The tract at residues 1–22 (MQQPARTKYRKQQKGRNKGIAT) is disordered. The span at 7–17 (TKYRKQQKGRN) shows a compositional bias: basic residues.

This sequence belongs to the universal ribosomal protein uL16 family. Part of the 50S ribosomal subunit.

Its function is as follows. Binds 23S rRNA and is also seen to make contacts with the A and possibly P site tRNAs. The chain is Large ribosomal subunit protein uL16 from Nitrosospira multiformis (strain ATCC 25196 / NCIMB 11849 / C 71).